Reading from the N-terminus, the 101-residue chain is Urease subunit beta (101 aa).

The protein belongs to the urease beta subunit family. Heterotrimer of UreA (gamma), UreB (beta) and UreC (alpha) subunits. Three heterotrimers associate to form the active enzyme.

The protein resides in the cytoplasm. The catalysed reaction is urea + 2 H2O + H(+) = hydrogencarbonate + 2 NH4(+). Its pathway is nitrogen metabolism; urea degradation; CO(2) and NH(3) from urea (urease route): step 1/1. The polypeptide is Urease subunit beta (Allorhizobium ampelinum (strain ATCC BAA-846 / DSM 112012 / S4) (Agrobacterium vitis (strain S4))).